Reading from the N-terminus, the 811-residue chain is Zinc finger CCCH domain-containing protein 11A (811 aa).

3 C3H1-type zinc fingers span residues 2–30 (PNQG…HCEA), 32–58 (LGNE…HMEI), and 61–87 (KRSE…HHNR). Ser109 is modified (phosphoserine). Glycyl lysine isopeptide (Lys-Gly) (interchain with G-Cter in SUMO2) cross-links involve residues Lys115 and Lys125. The residue at position 133 (Ser133) is a Phosphoserine. Disordered stretches follow at residues 140-195 (MKVE…GLRV), 224-258 (KKMK…KENV), 286-352 (GKRK…EKVN), and 368-434 (ERAS…TCIK). A Glycyl lysine isopeptide (Lys-Gly) (interchain with G-Cter in SUMO2) cross-link involves residue Lys141. Phosphoserine occurs at positions 150 and 172. Positions 161 to 176 (ADDDEDDDDQFSEEGD) are enriched in acidic residues. The residue at position 291 (Ser291) is a Phosphoserine. Composition is skewed to basic and acidic residues over residues 310-323 (KKVE…DKTP) and 368-391 (ERAS…KTDD). A Phosphothreonine modification is found at Thr322. Residues 363-424 (EEILLERASQ…KHRQQEAERQ (62 aa)) are a coiled coil. Ser371 is modified (phosphoserine). Positions 392–403 (STSGARSSSTIR) are enriched in polar residues. A compositionally biased stretch (basic and acidic residues) spans 418–434 (QQEAERQKSKKDTTCIK). Residue Lys479 forms a Glycyl lysine isopeptide (Lys-Gly) (interchain with G-Cter in SUMO2) linkage. Positions 483–550 (ALRVQQSSES…KEASGETTGV (68 aa)) are disordered. Low complexity predominate over residues 487–499 (QQSSESSTSSPSQ). Lys620 participates in a covalent cross-link: Glycyl lysine isopeptide (Lys-Gly) (interchain with G-Cter in SUMO2). A disordered region spans residues 716 to 769 (TVPEAENPRDSLVLPPTQSSSDSSPPEVSGPSSSQMSMKTRRLSSASTGKPQLS). Residues 730–749 (PPTQSSSDSSPPEVSGPSSS) show a composition bias toward low complexity. A compositionally biased stretch (polar residues) spans 750-766 (QMSMKTRRLSSASTGKP).

As to quaternary structure, interacts with TREX complex components THOC2, DDX39 and POLDIP3; the interactions are ATP-dependent. Interacts with PABPN1; this interaction retains ZC3H11A in nuclear speckles. Interacts with KPNA3.

It localises to the nucleus speckle. In terms of biological role, through its association with TREX complex components, may participate in the export and post-transcriptional coordination of selected mRNA transcripts, including those required to maintain the metabolic processes in embryonic cells. Binds RNA. In Pongo abelii (Sumatran orangutan), this protein is Zinc finger CCCH domain-containing protein 11A (ZC3H11A).